Consider the following 261-residue polypeptide: Carnitinyl-CoA dehydratase (261 aa).

The active-site Nucleophile is the glutamate 111. Residue glutamate 131 is the Proton acceptor of the active site.

It belongs to the enoyl-CoA hydratase/isomerase family.

The catalysed reaction is (R)-carnitinyl-CoA = crotonobetainyl-CoA + H2O. It participates in amine and polyamine metabolism; carnitine metabolism. Catalyzes the reversible dehydration of L-carnitinyl-CoA to crotonobetainyl-CoA. In Shigella flexneri, this protein is Carnitinyl-CoA dehydratase.